A 931-amino-acid chain; its full sequence is Isoleucine--tRNA ligase (931 aa).

Residues Pro57 to His67 carry the 'HIGH' region motif. Glu556 contacts L-isoleucyl-5'-AMP. Residues Lys597–Ser601 carry the 'KMSKS' region motif. Lys600 provides a ligand contact to ATP. Zn(2+) is bound by residues Cys890, Cys893, Cys910, and Cys913.

This sequence belongs to the class-I aminoacyl-tRNA synthetase family. IleS type 1 subfamily. Monomer. Requires Zn(2+) as cofactor.

It is found in the cytoplasm. It catalyses the reaction tRNA(Ile) + L-isoleucine + ATP = L-isoleucyl-tRNA(Ile) + AMP + diphosphate. Functionally, catalyzes the attachment of isoleucine to tRNA(Ile). As IleRS can inadvertently accommodate and process structurally similar amino acids such as valine, to avoid such errors it has two additional distinct tRNA(Ile)-dependent editing activities. One activity is designated as 'pretransfer' editing and involves the hydrolysis of activated Val-AMP. The other activity is designated 'posttransfer' editing and involves deacylation of mischarged Val-tRNA(Ile). The protein is Isoleucine--tRNA ligase of Lactobacillus delbrueckii subsp. bulgaricus (strain ATCC 11842 / DSM 20081 / BCRC 10696 / JCM 1002 / NBRC 13953 / NCIMB 11778 / NCTC 12712 / WDCM 00102 / Lb 14).